A 403-amino-acid polypeptide reads, in one-letter code: Phosphoglycerate kinase (403 aa).

Substrate contacts are provided by residues 24–26 (DLN), Arg-39, 62–65 (HLGR), Arg-121, and Arg-161. ATP-binding positions include Lys-211, Gly-299, Glu-330, and 359 to 362 (GGDS).

It belongs to the phosphoglycerate kinase family. Monomer.

It localises to the cytoplasm. The catalysed reaction is (2R)-3-phosphoglycerate + ATP = (2R)-3-phospho-glyceroyl phosphate + ADP. It participates in carbohydrate degradation; glycolysis; pyruvate from D-glyceraldehyde 3-phosphate: step 2/5. This is Phosphoglycerate kinase from Corynebacterium kroppenstedtii (strain DSM 44385 / JCM 11950 / CIP 105744 / CCUG 35717).